The sequence spans 245 residues: tRNA (guanine-N(7)-)-methyltransferase (245 aa).

S-adenosyl-L-methionine contacts are provided by residues G70, 93–94 (EI), 126–127 (NA), and L146. D149 is an active-site residue. 224 to 226 (SEE) serves as a coordination point for S-adenosyl-L-methionine.

This sequence belongs to the class I-like SAM-binding methyltransferase superfamily. TrmB family.

It localises to the nucleus. It carries out the reaction guanosine(46) in tRNA + S-adenosyl-L-methionine = N(7)-methylguanosine(46) in tRNA + S-adenosyl-L-homocysteine. It participates in tRNA modification; N(7)-methylguanine-tRNA biosynthesis. Its function is as follows. Catalyzes the formation of N(7)-methylguanine at position 46 (m7G46) in tRNA. This Aedes aegypti (Yellowfever mosquito) protein is tRNA (guanine-N(7)-)-methyltransferase.